Consider the following 570-residue polypeptide: Periplasmic trehalase (570 aa).

Positions 1–34 (MIPPEIRRSVLLQKAIKLALAGTLLTFASFSATA) are cleaved as a signal peptide. Residues Arg-159, 166–167 (WD), Asn-203, 212–214 (RSQ), 284–286 (RPE), and Gly-317 each bind substrate. Catalysis depends on proton donor/acceptor residues Asp-319 and Glu-503. Residue Glu-518 participates in substrate binding. The segment at 544-570 (KPCDSVPSTRPASLSATPTKTPSAATQ) is disordered. Over residues 554–570 (PASLSATPTKTPSAATQ) the composition is skewed to low complexity.

Belongs to the glycosyl hydrolase 37 family. Monomer.

The protein localises to the periplasm. The enzyme catalyses alpha,alpha-trehalose + H2O = alpha-D-glucose + beta-D-glucose. Its function is as follows. Provides the cells with the ability to utilize trehalose at high osmolarity by splitting it into glucose molecules that can subsequently be taken up by the phosphotransferase-mediated uptake system. The chain is Periplasmic trehalase from Salmonella dublin (strain CT_02021853).